Here is a 511-residue protein sequence, read N- to C-terminus: Potassium voltage-gated channel subfamily A member 10 (511 aa).

Positions 22-50 (IQEEPGYATDFDSTSPKGRPGGSSFSNGK) are disordered. The helical transmembrane segment at 218–238 (VAVVSVLVVVISITIFCLETL) threads the bilayer. An N-linked (GlcNAc...) asparagine glycan is attached at Asn-256. Residues 271–292 (FFMVESTCIVWFTFELVLRFVV) traverse the membrane as a helical segment. A lipid anchor (S-palmitoyl cysteine) is attached at Cys-293. Residues 303–323 (IMNIIDIISIIPYFATLITEL) traverse the membrane as a helical segment. Residue Asn-334 is glycosylated (N-linked (GlcNAc...) asparagine). The chain crosses the membrane as a helical; Voltage-sensor span at residues 339-358 (ILRIIRLVRVFRIFKLSRHS). A helical transmembrane segment spans residues 375–395 (LGLLIFFLFIGVILFSSAVYF). The Selectivity filter motif lies at 421-426 (TVGYGD). A helical transmembrane segment spans residues 436-456 (IVGTLCAIAGVLTIALPVPVI). Residues 489–511 (SRMGSTDSLNKTNGGCSTEKSRK) form a disordered region. N-linked (GlcNAc...) asparagine glycosylation occurs at Asn-498.

This sequence belongs to the potassium channel family. A (Shaker) (TC 1.A.1.2) subfamily. Kv1.8/KCNA10 sub-subfamily. As to quaternary structure, homotetramer. Interacts with KCN4B/POMP. Interaction with KCN4B/POMP is necessary for the modulation of channel activity by cAMP. In terms of tissue distribution, detected in kidney, in proximal tubules, glomerular endothelium, in vascular endothelium and in smooth muscle cells.

It is found in the membrane. It carries out the reaction K(+)(in) = K(+)(out). Its activity is regulated as follows. The channel activity is up-regulated by cAMP. Its function is as follows. Voltage-gated potassium ion channel that mediates K(+) permeability of excitable membranes. When opened in response to the voltage difference across the membrane, KCNA10 channel selectively allows the flow of potassium ions across the membrane down their electrochemical gradient. The sequence is that of Potassium voltage-gated channel subfamily A member 10 from Homo sapiens (Human).